A 369-amino-acid chain; its full sequence is Glutamate 5-kinase (369 aa).

Lys11 serves as a coordination point for ATP. Substrate-binding residues include Ser51, Asp138, and Asn150. Residues 170-171 (TD) and 212-218 (TGGMATK) contribute to the ATP site. The PUA domain maps to 277–355 (KGSIVIDEGA…QDIYAVLGYE (79 aa)).

This sequence belongs to the glutamate 5-kinase family.

It localises to the cytoplasm. It catalyses the reaction L-glutamate + ATP = L-glutamyl 5-phosphate + ADP. Its pathway is amino-acid biosynthesis; L-proline biosynthesis; L-glutamate 5-semialdehyde from L-glutamate: step 1/2. Its function is as follows. Catalyzes the transfer of a phosphate group to glutamate to form L-glutamate 5-phosphate. This is Glutamate 5-kinase from Aliivibrio fischeri (strain ATCC 700601 / ES114) (Vibrio fischeri).